Consider the following 479-residue polypeptide: Ribosomal RNA small subunit methyltransferase F (479 aa).

Residues 125–131 (AAAPGSK), E149, D176, and D194 each bind S-adenosyl-L-methionine. C247 serves as the catalytic Nucleophile.

This sequence belongs to the class I-like SAM-binding methyltransferase superfamily. RsmB/NOP family.

It is found in the cytoplasm. It carries out the reaction cytidine(1407) in 16S rRNA + S-adenosyl-L-methionine = 5-methylcytidine(1407) in 16S rRNA + S-adenosyl-L-homocysteine + H(+). Its function is as follows. Specifically methylates the cytosine at position 1407 (m5C1407) of 16S rRNA. In Escherichia coli (strain UTI89 / UPEC), this protein is Ribosomal RNA small subunit methyltransferase F.